Reading from the N-terminus, the 65-residue chain is UPF0434 protein BH12860 (65 aa).

The protein belongs to the UPF0434 family.

The protein is UPF0434 protein BH12860 of Bartonella henselae (strain ATCC 49882 / DSM 28221 / CCUG 30454 / Houston 1) (Rochalimaea henselae).